The primary structure comprises 261 residues: Oxidoreductase ptaF (261 aa).

It belongs to the avfA family.

It functions in the pathway secondary metabolite biosynthesis. In terms of biological role, oxidoreductase; part of the gene cluster that mediates the biosynthesis of pestheic acid, a diphenyl ether which is a biosynthetic precursor of the unique chloropupukeananes. The biosynthesis initiates from condensation of acetate and malonate units catalyzed by the non-reducing PKS ptaA. As the ptaA protein is TE/CLC domain-deficient, hydrolysis and Claisen cyclization of the polyketide could be catalyzed by ptaB containing a beta-lactamase domain. The ptaB protein might hydrolyze the thioester bond between the ACP of ptaA and the intermediate to release atrochrysone carboxylic acid, which is spontaneously dehydrated to form endocrocin anthrone. Endocrocin anthrone is then converted to endocrocin, catalyzed by the anthrone oxygenase ptaC. Spontaneous decarboxylation of endocrocin occurs to generate emodin. An O-methyltransferase (ptaH or ptaI) could methylate emodin to form physcion. PtaJ could then catalyze the oxidative cleavage of physcion, and rotation of the intermediate could then afford desmethylisosulochrin. PtaF, a putative NADH-dependent oxidoreductase, might also participate in the oxidative cleavage step. Desmethylisosulochrin is then transformed by another O-methyltransferase (ptaH or ptaI) to form isosulochrin. Chlorination of isosulochrin by ptaM in the cyclohexadienone B ring then produces chloroisosulochrin. PtaE is responsible for the oxidative coupling reactions of both benzophenones isosulouchrin and chloroisosulochrin to RES-1214-1 and pestheic acid respectively, regardless of chlorination. This is Oxidoreductase ptaF from Pestalotiopsis fici (strain W106-1 / CGMCC3.15140).